A 723-amino-acid chain; its full sequence is MASGRGASSRWFFTREQLENTPSRRCGVEADEELSHRQQAANLIQDMGQRLNVSQLTINTAIVYMHRFYMHHSFTKFNRNIISPTALFLAAKVEEQARKLEHVIKVAHACLHPLEPLLDTKCDAYLQQTQELVLLETIMLQTLGFEITIEHPHTDVVKCTQLVRASKDLAQTSYFMATNSLHLTTFCLQYKPTVIACVCIHLACKWSNWEIPVSTDGKHWWEYVDPTVTLELLDELTHEFLQILEKTPSRLKRIRNWRAMAKKPKVDGQVSETPLLGSSLVQNSILVDSVTGVPANPSFQKPSTSTFPAPIPLNSGSTSVQDSRASDNLSVLAAGMPSTSYSLSSHQEWPQHPDSARTDPVYTQKQEATLSGSQYISFQQGPSMALHSGLHHRPDKVADHSSAKQEYTHKAGSSKHHGPIPATPGMLPQKMSLDKYREKRKLETLDVDTRDHYLAAHAEQQHKHGPAQAVTGTSVTSPIKMKLPLTNSDRPEKHVAEKKERSGSLKLRIPIPPPDKGPSKEELKMKIKVASSERHSSSDEGSGKSKHSSPHISRDHKEKHKEHPANRHHSSHKYLHMHSGGSKHTADGMPPTVLRSPVGLGPEGVSSASSARKKLHSSEASHNHHSKMSKSSKSAGSSSSSSSVKQYLSSHSSVFNHPLPPPPPVTYQVGYGHLSTLVKLDKKPVEPHGPEANHEYSTSSQHMDYKDTFDMLDSLLSAQGMNM.

Residues Met-1–Ser-298 are interaction with MDFIC and MDFI. Residues Phe-12 to Ile-147 form the Cyclin N-terminal domain. The tract at residues Arg-250 to Ser-298 is interaction with POLR2A. Composition is skewed to polar residues over residues Pro-297–Phe-307 and Asn-314–Ala-325. 4 disordered regions span residues Pro-297 to Ala-325, Ser-340 to Gln-364, Ala-385 to Pro-428, and Ala-458 to Lys-645. The span at Asp-395–His-409 shows a compositional bias: basic and acidic residues. Lys-404 is covalently cross-linked (Glycyl lysine isopeptide (Lys-Gly) (interchain with G-Cter in SUMO2)). Position 477 is a phosphoserine (Ser-477). 3 stretches are compositionally biased toward basic and acidic residues: residues Asp-489–Gly-503, Gly-517–Gly-543, and Ile-552–Ala-565. A compositionally biased stretch (basic residues) spans Asn-566–His-576. Residue Ser-596 is modified to Phosphoserine. A compositionally biased stretch (low complexity) spans Ser-631 to Lys-645.

The protein belongs to the cyclin family. Cyclin C subfamily. Interacts with CDK9 to form P-TEFb. Interacts with POLR2A (via the C-terminal domain (CTD)); mediates transcriptional activity. Interacts with HEXIM1; mediates formation of a tripartite complex with KPNA2. Interacts with HEXIM2. Interacts with PKN1; enhances MYOD1-dependent transcription. P-TEFB complex interacts with RB1; promotes phosphorylation of RB1. P-TEFB complex interacts with MYOD1; promotes the transcriptional activity of MYOD1 through its CDK9-mediated phosphorylation. Interacts with MDFI and MDFIC. Highly expressed in all phases of skeletal muscle differentiation, particularly in later stages. Highly expressed in skeletal muscle. Significantly expressed in heart, brain, kidney, liver, testis, and pancreas.

It localises to the cytoplasm. The protein localises to the perinuclear region. The protein resides in the nucleus. In terms of biological role, regulatory subunit of the cyclin-dependent kinase pair (CDK9/cyclin T) complex, also called positive transcription elongation factor B (P-TEFB), which is proposed to facilitate the transition from abortive to production elongation by phosphorylating the CTD (carboxy-terminal domain) of the large subunit of RNA polymerase II (RNAP II). The activity of this complex is regulated by binding with 7SK snRNA. Plays a role during muscle differentiation; P-TEFB complex interacts with MYOD1; this tripartite complex promotes the transcriptional activity of MYOD1 through its CDK9-mediated phosphorylation and binds the chromatin of promoters and enhancers of muscle-specific genes; this event correlates with hyperphosphorylation of the CTD domain of RNA pol II. In addition, enhances MYOD1-dependent transcription through interaction with PKN1. Involved in early embryo development. In Mus musculus (Mouse), this protein is Cyclin-T2.